A 375-amino-acid chain; its full sequence is 23S rRNA (uracil(747)-C(5))-methyltransferase RlmC (375 aa).

Residues C3, C11, C14, and C87 each contribute to the [4Fe-4S] cluster site. S-adenosyl-L-methionine is bound by residues Q212, F241, E262, and N307. Catalysis depends on C334, which acts as the Nucleophile.

It belongs to the class I-like SAM-binding methyltransferase superfamily. RNA M5U methyltransferase family. RlmC subfamily.

The catalysed reaction is uridine(747) in 23S rRNA + S-adenosyl-L-methionine = 5-methyluridine(747) in 23S rRNA + S-adenosyl-L-homocysteine + H(+). Its function is as follows. Catalyzes the formation of 5-methyl-uridine at position 747 (m5U747) in 23S rRNA. The protein is 23S rRNA (uracil(747)-C(5))-methyltransferase RlmC of Cronobacter sakazakii (strain ATCC BAA-894) (Enterobacter sakazakii).